A 398-amino-acid polypeptide reads, in one-letter code: MERSQKSARKKKKTSKSGNDRSIRSERKSKQKKPAGEKSQKSRRTRKSRGPKGNGFTSRETIQPSSSGQSEGTTRMDDQKDEKKDDKKEEKKEERKEEKKEEVKEPWSEEEPAKRMVANGFFTTTNVGGTFKQTDNFKTPMDSCPSFKNNMHKIRAPDCPIPEEKLVKLTNGPESFICAAKITVPDFNRTMILTQVPDLSSAPDIADFWRMIHQESIASVVIAVMPLEVTLQQILPLLSGTYSTYGKMFVNNKKVESAVGMTEYCLEIFPDGCSNSLLTTVYHLHNWRQKRGLEVVTDLVATMEKVMKVNDNTVLMSMNGTGRAGTMLTLFTAMLQVQKGKEVNAKETLASLRAERCGIVDNIDQFGTVHRSMACWFKNNSTNEEVQRKVVEFAPSIQ.

Residues 1-15 (MERSQKSARKKKKTS) are compositionally biased toward basic residues. A disordered region spans residues 1–114 (MERSQKSARK…EPWSEEEPAK (114 aa)). Basic and acidic residues predominate over residues 18-40 (GNDRSIRSERKSKQKKPAGEKSQ). Residues 41-50 (KSRRTRKSRG) show a composition bias toward basic residues. Residues 55-73 (GFTSRETIQPSSSGQSEGT) are compositionally biased toward polar residues. Over residues 74–114 (TRMDDQKDEKKDDKKEEKKEERKEEKKEEVKEPWSEEEPAK) the composition is skewed to basic and acidic residues. A Tyrosine-protein phosphatase domain is found at 125-376 (TNVGGTFKQT…GTVHRSMACW (252 aa)).

Belongs to the protein-tyrosine phosphatase family. Non-receptor class subfamily.

It carries out the reaction O-phospho-L-tyrosyl-[protein] + H2O = L-tyrosyl-[protein] + phosphate. This Caenorhabditis elegans protein is Putative tyrosine-protein phosphatase C15H7.3.